Reading from the N-terminus, the 255-residue chain is Imidazole glycerol phosphate synthase subunit HisF (255 aa).

Active-site residues include Asp11 and Asp130.

Belongs to the HisA/HisF family. In terms of assembly, heterodimer of HisH and HisF.

The protein resides in the cytoplasm. It catalyses the reaction 5-[(5-phospho-1-deoxy-D-ribulos-1-ylimino)methylamino]-1-(5-phospho-beta-D-ribosyl)imidazole-4-carboxamide + L-glutamine = D-erythro-1-(imidazol-4-yl)glycerol 3-phosphate + 5-amino-1-(5-phospho-beta-D-ribosyl)imidazole-4-carboxamide + L-glutamate + H(+). Its pathway is amino-acid biosynthesis; L-histidine biosynthesis; L-histidine from 5-phospho-alpha-D-ribose 1-diphosphate: step 5/9. In terms of biological role, IGPS catalyzes the conversion of PRFAR and glutamine to IGP, AICAR and glutamate. The HisF subunit catalyzes the cyclization activity that produces IGP and AICAR from PRFAR using the ammonia provided by the HisH subunit. The sequence is that of Imidazole glycerol phosphate synthase subunit HisF from Campylobacter jejuni subsp. jejuni serotype O:6 (strain 81116 / NCTC 11828).